A 352-amino-acid chain; its full sequence is Coproporphyrin III ferrochelatase (352 aa).

Residues S52 and Y121 each coordinate Fe-coproporphyrin III. The Fe(2+) site is built by H178 and E267.

The protein belongs to the ferrochelatase family.

The protein localises to the cytoplasm. The enzyme catalyses Fe-coproporphyrin III + 2 H(+) = coproporphyrin III + Fe(2+). It functions in the pathway porphyrin-containing compound metabolism; protoheme biosynthesis. In terms of biological role, involved in coproporphyrin-dependent heme b biosynthesis. Catalyzes the insertion of ferrous iron into coproporphyrin III to form Fe-coproporphyrin III. The polypeptide is Coproporphyrin III ferrochelatase (Propionibacterium freudenreichii subsp. freudenreichii).